The following is a 341-amino-acid chain: Queuosine 5'-phosphate N-glycosylase/hydrolase (341 aa).

The residue at position 1 (methionine 1) is an N-acetylmethionine. 6 residues coordinate queuine: histidine 53, phenylalanine 237, aspartate 239, aspartate 314, tyrosine 315, and aspartate 319. The active-site Nucleophile or transition state stabilizer is the aspartate 239.

It belongs to the QNG1 protein family.

It carries out the reaction queuosine 5'-phosphate + H2O = queuine + D-ribose 5-phosphate. Catalyzes the hydrolysis of queuosine 5'-phosphate, releasing the nucleobase queuine (q). Is required for salvage of queuine from exogenous queuosine (Q) that is imported and then converted to queuosine 5'-phosphate intracellularly. The chain is Queuosine 5'-phosphate N-glycosylase/hydrolase from Bos taurus (Bovine).